Reading from the N-terminus, the 357-residue chain is S-adenosyl-L-methionine:benzoic acid/salicylic acid carboxyl methyltransferase 1 (357 aa).

Residue Tyr18 coordinates S-adenosyl-L-homocysteine. Residue Gln25 coordinates benzoate. Positions 59, 64, 96, 97, 135, and 136 each coordinate S-adenosyl-L-homocysteine. Trp157 is a binding site for benzoate. Residues Asn168, Asp254, Phe256, and Asn257 each contribute to the Mg(2+) site. Benzoate is bound at residue Gln260.

The protein belongs to the methyltransferase superfamily. Type-7 methyltransferase family. As to expression, predominantly expressed in petal limbs and tubes of corollas.

It carries out the reaction benzoate + S-adenosyl-L-methionine = methyl benzoate + S-adenosyl-L-homocysteine. The catalysed reaction is salicylate + S-adenosyl-L-methionine = methyl salicylate + S-adenosyl-L-homocysteine. Its pathway is aromatic compound metabolism. In terms of biological role, converts benzoic acid into the volatile ester methyl benzoates. This scent, mostly produced in a rhythmical, diurnal manner, attracts the pollinators. This is S-adenosyl-L-methionine:benzoic acid/salicylic acid carboxyl methyltransferase 1 from Petunia hybrida (Petunia).